Reading from the N-terminus, the 882-residue chain is DNA mismatch repair protein MutS (882 aa).

Position 635–642 (635–642 (GPNMGGKS)) interacts with ATP.

Belongs to the DNA mismatch repair MutS family.

Its function is as follows. This protein is involved in the repair of mismatches in DNA. It is possible that it carries out the mismatch recognition step. This protein has a weak ATPase activity. This is DNA mismatch repair protein MutS from Janthinobacterium sp. (strain Marseille) (Minibacterium massiliensis).